The chain runs to 542 residues: Major facilitator superfamily domain-containing protein 6-like (542 aa).

A run of 11 helical transmembrane segments spans residues 46-66 (LGLS…LALL), 89-109 (LLSS…GILV), 198-218 (MFFL…PLEW), 246-266 (VGAA…FCRI), 272-292 (FYSY…LPIY), 321-341 (VTVI…LWLM), 352-372 (GICL…AGPL), 381-401 (WMLV…SFLW), 404-424 (WAVM…WWSV), 444-464 (FEAF…GFVV), and 469-489 (VNVL…ALAV).

It belongs to the major facilitator superfamily. MFSD6 family.

It localises to the membrane. This is Major facilitator superfamily domain-containing protein 6-like (mfsd6l) from Danio rerio (Zebrafish).